A 254-amino-acid chain; its full sequence is Flavin-dependent thymidylate synthase (254 aa).

One can recognise a ThyX domain in the interval 7-237 (LRVQLIARTE…PAVFADFEIY (231 aa)). Residues S71, 95–97 (RHR), and Q103 each bind FAD. DUMP is bound by residues 92–95 (ELIR), 103–107 (QLSQR), and R176. Positions 95–105 (RHRHFSYSQLS) match the ThyX motif motif. FAD is bound by residues 192-194 (NYR) and H198. R203 provides a ligand contact to dUMP. R203 acts as the Involved in ionization of N3 of dUMP, leading to its activation in catalysis.

The protein belongs to the thymidylate synthase ThyX family. Homotetramer. FAD serves as cofactor.

It catalyses the reaction dUMP + (6R)-5,10-methylene-5,6,7,8-tetrahydrofolate + NADPH + H(+) = dTMP + (6S)-5,6,7,8-tetrahydrofolate + NADP(+). It functions in the pathway pyrimidine metabolism; dTTP biosynthesis. In terms of biological role, catalyzes the reductive methylation of 2'-deoxyuridine-5'-monophosphate (dUMP) to 2'-deoxythymidine-5'-monophosphate (dTMP) while utilizing 5,10-methylenetetrahydrofolate (mTHF) as the methyl donor, and NADPH and FADH(2) as the reductant. This is Flavin-dependent thymidylate synthase from Mycobacterium sp. (strain JLS).